The sequence spans 433 residues: Mitochondrial distribution and morphology protein 12 (433 aa).

One can recognise an SMP-LTD domain in the interval 1–433 (MSIDIDWERA…VYPSFWTFLI (433 aa)). 3 disordered regions span residues 62–113 (LSDP…GGQM), 180–279 (TPLG…RMRE), and 356–376 (GPET…SPRR). Over residues 81–96 (SEERSPTREPVDRYGN) the composition is skewed to basic and acidic residues. Positions 214 to 236 (SAQSRPSTANTGNTLPSRDSMSV) are enriched in polar residues. Residues 268-279 (PLDDTPPRRMRE) show a composition bias toward basic and acidic residues.

This sequence belongs to the MDM12 family. Component of the ER-mitochondria encounter structure (ERMES) or MDM complex, composed of MMM1, MDM10, MDM12 and MDM34. An MMM1 homodimer associates with one molecule of MDM12 on each side in a pairwise head-to-tail manner, and the SMP-LTD domains of MMM1 and MDM12 generate a continuous hydrophobic tunnel for phospholipid trafficking.

Its subcellular location is the mitochondrion outer membrane. The protein resides in the endoplasmic reticulum membrane. Functionally, component of the ERMES/MDM complex, which serves as a molecular tether to connect the endoplasmic reticulum (ER) and mitochondria. Components of this complex are involved in the control of mitochondrial shape and protein biogenesis, and function in nonvesicular lipid trafficking between the ER and mitochondria. MDM12 is required for the interaction of the ER-resident membrane protein MMM1 and the outer mitochondrial membrane-resident beta-barrel protein MDM10. The MDM12-MMM1 subcomplex functions in the major beta-barrel assembly pathway that is responsible for biogenesis of all mitochondrial outer membrane beta-barrel proteins, and acts in a late step after the SAM complex. The MDM10-MDM12-MMM1 subcomplex further acts in the TOM40-specific pathway after the action of the MDM12-MMM1 complex. Essential for establishing and maintaining the structure of mitochondria and maintenance of mtDNA nucleoids. This chain is Mitochondrial distribution and morphology protein 12, found in Ajellomyces capsulatus (strain NAm1 / WU24) (Darling's disease fungus).